The sequence spans 124 residues: Hydrogenase maturation factor HypA (124 aa).

Ni(2+) is bound at residue His-2. Zn(2+)-binding residues include Cys-78, Cys-81, Cys-97, and Cys-100.

Belongs to the HypA/HybF family.

Involved in the maturation of [NiFe] hydrogenases. Required for nickel insertion into the metal center of the hydrogenase. This is Hydrogenase maturation factor HypA from Methanococcus vannielii (strain ATCC 35089 / DSM 1224 / JCM 13029 / OCM 148 / SB).